Here is a 261-residue protein sequence, read N- to C-terminus: uncharacterized protein (261 aa).

I33, D78, and N105 together coordinate NADP(+). S157 acts as the Proton donor in catalysis. Residues Y172, K176, and S206 each coordinate NADP(+). Y172 acts as the Proton acceptor in catalysis. The active-site Lowers pKa of active site Tyr is the K176.

Belongs to the short-chain dehydrogenases/reductases (SDR) family.

Its subcellular location is the cytoplasm. It is found in the nucleus. This is an uncharacterized protein from Schizosaccharomyces pombe (strain 972 / ATCC 24843) (Fission yeast).